The chain runs to 473 residues: GTPase Der (473 aa).

EngA-type G domains are found at residues 3–167 (FTVA…GKDR) and 203–378 (LRVA…RVWN). GTP is bound by residues 9 to 16 (GRPNVGKS), 56 to 60 (DTAGL), 119 to 122 (NKSE), 209 to 216 (GRPNAGKS), 256 to 260 (DTAGM), and 321 to 324 (NKWD). One can recognise a KH-like domain in the interval 379-463 (KRISTARLNR…PIRIHFRSAE (85 aa)).

The protein belongs to the TRAFAC class TrmE-Era-EngA-EngB-Septin-like GTPase superfamily. EngA (Der) GTPase family. In terms of assembly, associates with the 50S ribosomal subunit.

Functionally, GTPase that plays an essential role in the late steps of ribosome biogenesis. The protein is GTPase Der of Rhizobium etli (strain CIAT 652).